A 153-amino-acid polypeptide reads, in one-letter code: Large ribosomal subunit protein uL13 (153 aa).

This sequence belongs to the universal ribosomal protein uL13 family. In terms of assembly, part of the 50S ribosomal subunit.

Its function is as follows. This protein is one of the early assembly proteins of the 50S ribosomal subunit, although it is not seen to bind rRNA by itself. It is important during the early stages of 50S assembly. This is Large ribosomal subunit protein uL13 from Chelativorans sp. (strain BNC1).